Here is a 355-residue protein sequence, read N- to C-terminus: S-adenosylmethionine:tRNA ribosyltransferase-isomerase (355 aa).

This sequence belongs to the QueA family. In terms of assembly, monomer.

It is found in the cytoplasm. It catalyses the reaction 7-aminomethyl-7-carbaguanosine(34) in tRNA + S-adenosyl-L-methionine = epoxyqueuosine(34) in tRNA + adenine + L-methionine + 2 H(+). It functions in the pathway tRNA modification; tRNA-queuosine biosynthesis. Transfers and isomerizes the ribose moiety from AdoMet to the 7-aminomethyl group of 7-deazaguanine (preQ1-tRNA) to give epoxyqueuosine (oQ-tRNA). The polypeptide is S-adenosylmethionine:tRNA ribosyltransferase-isomerase (Burkholderia ambifaria (strain ATCC BAA-244 / DSM 16087 / CCUG 44356 / LMG 19182 / AMMD) (Burkholderia cepacia (strain AMMD))).